A 153-amino-acid polypeptide reads, in one-letter code: Methylglyoxal synthase (153 aa).

The MGS-like domain occupies 6-153 (RTIAARKHIA…QRYLAERLPS (148 aa)). Residues histidine 19, lysine 23, 45-48 (TGTT), and 65-66 (SG) each bind substrate. Aspartate 71 acts as the Proton donor/acceptor in catalysis. Histidine 98 contacts substrate.

Belongs to the methylglyoxal synthase family.

The catalysed reaction is dihydroxyacetone phosphate = methylglyoxal + phosphate. Functionally, catalyzes the formation of methylglyoxal from dihydroxyacetone phosphate. In Sodalis glossinidius (strain morsitans), this protein is Methylglyoxal synthase.